Here is a 354-residue protein sequence, read N- to C-terminus: Regulatory protein RapD (354 aa).

TPR repeat units follow at residues 64–105, 107–126, 130–163, 171–204, 211–244, and 321–353; these read FENQ…VKTA, KHAV…IHNT, ADLY…YLHQ, ITCK…TQQL, CHAY…QEFE, and IEAW…FIMR.

This sequence belongs to the Rap family.

Its subcellular location is the cytoplasm. The polypeptide is Regulatory protein RapD (rapD) (Bacillus subtilis (strain 168)).